Reading from the N-terminus, the 1819-residue chain is Non-reducing polyketide synthase 8 (1819 aa).

The 228-residue stretch at 38 to 265 folds into the Starter acyltransferase (SAT) domain; it reads QLTLLSKQKQ…QKIINLPVYG (228 aa). The Ketosynthase family 3 (KS3) domain maps to 405-840; that stretch reads KSSIAIVGMS…GGNTMIAIEE (436 aa). Active-site for beta-ketoacyl synthase activity residues include Cys578, His714, and His758. Residues 943–1262 form the Malonyl-CoA:ACP transacylase (MAT) domain; that stretch reads FAFTGQGASY…SLSTLHCAGA (320 aa). Residues 1336-1476 are N-terminal hotdog fold; it reads QRIIEESFDG…GDRSAWLSSW (141 aa). The PKS/mFAS DH domain occupies 1336 to 1646; that stretch reads QRIIEESFDG…FRQYPRILLN (311 aa). The Proton acceptor; for dehydratase activity role is filled by His1368. Residues 1404 to 1642 are dehydratase (DH) domain; it reads AMNVADLEVV…GGIKFRQYPR (239 aa). Residues 1498–1646 form a C-terminal hotdog fold region; sequence IANRLSHNMA…FRQYPRILLN (149 aa). Catalysis depends on Asp1557, which acts as the Proton donor; for dehydratase activity. The Carrier domain occupies 1741 to 1818; the sequence is VDTNSVASKA…DLRSWLMEYY (78 aa). An O-(pantetheine 4'-phosphoryl)serine modification is found at Ser1778.

Pantetheine 4'-phosphate is required as a cofactor.

It functions in the pathway secondary metabolite biosynthesis. Non-reducing polyketide synthase; part of the gene cluster that mediates the biosynthesis of dibenzodioxocinones such as pestalotiollide B, a novel class of inhibitors against cholesterol ester transfer protein (CEPT). The biosynthesis initiates from condensation of acetate and malonate units catalyzed by the non-reducing PKS pks8/GME11356. Pks8/GME11356 lacks a thioesterase (TE) domain, which is important to the cyclizing of the third ring of atrochrysone carboxylic acid, and the esterase GME11355 might play the role of TE and catalyzes the cyclization reaction of the C ring. The lactamase-like protein GME11357 (or other beta-lactamases in Pestalotiopsis microspora) probably hydrolyzes the thioester bond between the ACP of pks8/GME11356 and the intermediate to release atrochrysone carboxylic acid, which is spontaneously dehydrates to form endocrocin anthrone. Endocrocin anthrone is further converted to emodin via the endocrocin intermediate. Emodin is then oxidized by several enzymes such as the Baeyer-Villiger oxidase GME11358, the oxidoreductase GME11367, the short chain dehydrogenase/reductase GME11373, as well as by other oxidoreductases from the cluster, to modify the A and C rings and open the B ring, and finally yield monodictyphenone. The prenyltransferase GME11375 may catalyze the addition reaction between the C5 side chains and the carbon bone of dibenzodioxocinones. The remaining biochemical reactions to the final product dibenzodioxocinones should be methylation catalyzed by methyltransferase GME11366 and reduction and lactonization reaction catalyzed by a series of oxidordeuctases. The protein is Non-reducing polyketide synthase 8 of Pestalotiopsis microspora.